The sequence spans 310 residues: tRNA-cytidine(32) 2-sulfurtransferase (310 aa).

Positions 48–53 (SGGKDS) match the PP-loop motif motif. Positions 123, 126, and 214 each coordinate [4Fe-4S] cluster.

The protein belongs to the TtcA family. Homodimer. Requires Mg(2+) as cofactor. The cofactor is [4Fe-4S] cluster.

Its subcellular location is the cytoplasm. The enzyme catalyses cytidine(32) in tRNA + S-sulfanyl-L-cysteinyl-[cysteine desulfurase] + AH2 + ATP = 2-thiocytidine(32) in tRNA + L-cysteinyl-[cysteine desulfurase] + A + AMP + diphosphate + H(+). It participates in tRNA modification. Functionally, catalyzes the ATP-dependent 2-thiolation of cytidine in position 32 of tRNA, to form 2-thiocytidine (s(2)C32). The sulfur atoms are provided by the cysteine/cysteine desulfurase (IscS) system. The protein is tRNA-cytidine(32) 2-sulfurtransferase of Vibrio vulnificus (strain YJ016).